Consider the following 153-residue polypeptide: Small ribosomal subunit protein uS9 (153 aa).

The segment at 122 to 153 (KKAGFLTRDPRSTERKKYGLKKARKAPQYSKR) is disordered. Over residues 129–138 (RDPRSTERKK) the composition is skewed to basic and acidic residues. The span at 139–153 (YGLKKARKAPQYSKR) shows a compositional bias: basic residues.

Belongs to the universal ribosomal protein uS9 family.

This Mycobacterium leprae (strain TN) protein is Small ribosomal subunit protein uS9 (rpsI).